A 459-amino-acid polypeptide reads, in one-letter code: MKKLWGGRFQKTPEKWVDEFGASIHFDKTLVKEDIAGSLAHASMLEKCGILTEAEAVKIKEGLTSLLHKAEKNELDFSVDCEDIHLNLEKMLIDEIGPLGGKLHTARSRNDQVATDMHLYLKGHTEHIIELITAFQHVLIEKAEEHVETILPGYTHLQRAQPISFAHHLLAYFWMLERDKERYHDSFKRINKSPLGCGALAGTTFPIDREYSADLLGFDSIYENSLDGVSDRDFILEFLSASSILMMHLSRFSEEIILWCSQEFKFIELDDTYATGSSMMPQKKNPDMAELIRGKTGRVYGDLIGLLTIMKGLPLAYNKDLQEDKEGMFDTVKTVEGSLEIFAGMIKTMTVNKNMMKKATEQDFSNATELADYLAKKGMPFREAHEVVGRLVFTCIEKGIYLSGLPFEEFKKASGLFEEDVYIVLDPHHAVEKRMSEGGTGFKKVTEAIQKAKQCLNNF.

This sequence belongs to the lyase 1 family. Argininosuccinate lyase subfamily.

It is found in the cytoplasm. It carries out the reaction 2-(N(omega)-L-arginino)succinate = fumarate + L-arginine. It functions in the pathway amino-acid biosynthesis; L-arginine biosynthesis; L-arginine from L-ornithine and carbamoyl phosphate: step 3/3. This Bacillus licheniformis (strain ATCC 14580 / DSM 13 / JCM 2505 / CCUG 7422 / NBRC 12200 / NCIMB 9375 / NCTC 10341 / NRRL NRS-1264 / Gibson 46) protein is Argininosuccinate lyase.